The chain runs to 249 residues: Methyltransferase 1 (249 aa).

It belongs to the FkbM methyltransferase family.

It functions in the pathway secondary metabolite biosynthesis. Its function is as follows. Methyltransferase; part of the pathway that mediates the biosynthesis of tenellin-type 2-pyridones, iron-chelating compounds involved in iron stress tolerance, competition with the natural competitor fungus Metarhizium robertsii and insect hosts infection. Methylates pyridovericin-N-O-(beta-D-glucopyranoside) produced by the UDP-glucosyltransferase GT1 to yield pyridovericin-N-O-(4-O-methyl-beta-D-glucopyranoside) (PMGP). The pathway begins with the assembly of the polyketide-amino acid backbone by the hybrid PKS-NRPS tenS with the help of the enoyl reductase tenC. These enzymes catalyze the synthesis of the pyrrolidine-2-dione intermediates pretellinin A, 11-hydropretellenin A, 12-hydropretellenin A, 13-hydropretellenin A, 14-hydropretellenin A, 12-oxopretellenin A and prototellinin D. The cytochrome P450 monooxygenase tenA then catalyzes an oxidative ring expansion of pretenellin A and 14-hydropretellenin A to form the 2-pyridone core, leading to pretenellin B and pyridovericin, respectively. The cytochrome P450 monooxygenase tenB is then required for the selective N-hydroxylation of the 2-pyridone nitrogen of yield tellinin and 15-hydroxytellenin (15-HT), respectively. The UDP-glucosyltransferase GT1 and the methyltransferase MT1, located outside the tenS gene cluster, contribute to the stepwise glycosylation and methylation of 15-HT to obtain the glycoside pyridovericin-N-O-(4-O-methyl-beta-D-glucopyranoside) (PMGP). Additional related compounds such as 1-O-methyl-15-HT, (8Z)-1-O-methyl-15-HT, and O-methyltenellin A are also produced but the enzymes involved in their biosynthesis have still to be determined. The sequence is that of Methyltransferase 1 from Beauveria bassiana (strain ARSEF 2860) (White muscardine disease fungus).